A 637-amino-acid polypeptide reads, in one-letter code: Biosynthetic arginine decarboxylase (637 aa).

An N6-(pyridoxal phosphate)lysine modification is found at lysine 101. 286–296 (FDVGGGLAVDY) is a substrate binding site.

The protein belongs to the Orn/Lys/Arg decarboxylase class-II family. SpeA subfamily. The cofactor is Mg(2+). It depends on pyridoxal 5'-phosphate as a cofactor.

The catalysed reaction is L-arginine + H(+) = agmatine + CO2. Its pathway is amine and polyamine biosynthesis; agmatine biosynthesis; agmatine from L-arginine: step 1/1. Catalyzes the biosynthesis of agmatine from arginine. This is Biosynthetic arginine decarboxylase from Shewanella sp. (strain MR-7).